The following is a 617-amino-acid chain: Proline--tRNA ligase (617 aa).

This sequence belongs to the class-II aminoacyl-tRNA synthetase family. ProS type 1 subfamily. Homodimer.

Its subcellular location is the cytoplasm. The catalysed reaction is tRNA(Pro) + L-proline + ATP = L-prolyl-tRNA(Pro) + AMP + diphosphate. Catalyzes the attachment of proline to tRNA(Pro) in a two-step reaction: proline is first activated by ATP to form Pro-AMP and then transferred to the acceptor end of tRNA(Pro). As ProRS can inadvertently accommodate and process non-cognate amino acids such as alanine and cysteine, to avoid such errors it has two additional distinct editing activities against alanine. One activity is designated as 'pretransfer' editing and involves the tRNA(Pro)-independent hydrolysis of activated Ala-AMP. The other activity is designated 'posttransfer' editing and involves deacylation of mischarged Ala-tRNA(Pro). The misacylated Cys-tRNA(Pro) is not edited by ProRS. In Streptococcus pneumoniae serotype 4 (strain ATCC BAA-334 / TIGR4), this protein is Proline--tRNA ligase.